Consider the following 236-residue polypeptide: Thiamine import ATP-binding protein ThiQ (236 aa).

One can recognise an ABC transporter domain in the interval 2–230 (LKLEKITYLY…SAAKASVLGI (229 aa)). 32–39 (GPSGAGKS) contributes to the ATP binding site.

It belongs to the ABC transporter superfamily. Thiamine importer (TC 3.A.1.19.1) family. As to quaternary structure, the complex is composed of two ATP-binding proteins (ThiQ), two transmembrane proteins (ThiP) and a solute-binding protein (ThiB).

It is found in the cell inner membrane. The catalysed reaction is thiamine(out) + ATP + H2O = thiamine(in) + ADP + phosphate + H(+). Its function is as follows. Part of the ABC transporter complex ThiBPQ involved in thiamine import. Responsible for energy coupling to the transport system. The polypeptide is Thiamine import ATP-binding protein ThiQ (Yersinia pestis bv. Antiqua (strain Antiqua)).